Here is a 901-residue protein sequence, read N- to C-terminus: Probable inorganic carbon transporter subunit DabA (901 aa).

The Zn(2+) site is built by C424, D426, H606, and C621.

It belongs to the inorganic carbon transporter (TC 9.A.2) DabA family. As to quaternary structure, forms a complex with DabB. Requires Zn(2+) as cofactor.

It localises to the cell membrane. Part of an energy-coupled inorganic carbon pump. The polypeptide is Probable inorganic carbon transporter subunit DabA (Staphylococcus aureus (strain MRSA252)).